The following is a 504-amino-acid chain: MILSLLFLFVITLYFLIPSRISKINKNIPGPIGYPIVGNLFQINKNVVKSIDGFYKEFGPVYRLRMGNIETVVLTGIDTLEESFLFNKHSFVDRFVKKSRKINNGLDIIHSNGEYWKILKTIFQTQMTPRKIKSYQFEIQSQVDLMAEQLYKSKNNDNIVTNINENMKFMLFNIMSILIFGKQSIYCNNTNNINNKDDDDVDKEKKHIIFSIGRFFKTSGSLFYSDFIPILLPFDLINLSRNNFFKDFQVLTNFVSKNVNQQLSKLNDNNNNNKEKEGEERKSIVEAYLENYLNGEIKFESVLSSCTNLLLAGTDSSANTLSFLLVSLINNPEIQEKVYNEIITNLKNDEISINDRFKCPYTCAVIKETHRLYSIAPLSEPHYCSNDVEIKGFKIAKGTQIIQNIYSSSRSEQYWDKPLSFIPERFIDNANIKEKNKNIVSFGLGLRGCIGKSFAEYMIFLTVVRLIKNYKFSNPSPNQPLKEIGEYGLVMNCANYNAKIEKRK.

Residues 1–21 (MILSLLFLFVITLYFLIPSRI) traverse the membrane as a helical segment. Position 449 (cysteine 449) interacts with heme.

The protein belongs to the cytochrome P450 family. Heme is required as a cofactor.

Its subcellular location is the membrane. This is Probable cytochrome P450 513F1 (cyp513F1) from Dictyostelium discoideum (Social amoeba).